A 635-amino-acid polypeptide reads, in one-letter code: MDSAESPTKTQAGEDENYSLLCQAHEQFNNSEFDRCLELLQELETRGESSGPVLRHNRAVVSYYKTGCTQHSVLLKELEALTADADAPGDVSSGLSLKQGAAAATVARYNRAVIYYHRHMFGTALEKLAPLVARLEALEKAMAALVATLQLQLLLATNQLNRAEAFLDYLQYKLNLVATAPSSNAAEEAAVVGTAPPSAATNSSVVASPGGAAVEGAVPGLGGSLQLLQLITLVLNRKPVVIQEDGTPEYAALKAQQYYIMKDFQMAAKQLMRINNECTQAGTITPQLSTCIANNMGVIHLRVRHYAIAAKFFQNALNFDQQLARNLRQSTLQTMSSARSCEILYNLGVAMLHLRRPKEAFQCFLVPVKQFHSNPRLWLRMAEACIMEHEAKLVEEERQSQSETPSTKPYAPQSAGVPEPTLEFAVLCLRSALTLTQHYKTRFHMAAVSSEDVEAPEPKDPTQESWRHPQDNNFCNPSKPVSLESLENMMAAIYAAHSFVSLRLGDHVTALEMSEKLLACERLSDAHKLLGHMYAGEALMLMDKASEARDHLDPTFVGTLNAFDFETRDWQLKSVDAAQNVVRYNLAVAMALQNDLPQAKALLANLTHSLVANKALALRRFMDLKMGPVPGGTPS.

Threonine 45 carries the phosphothreonine modification. The stretch at 131–165 (LVARLEALEKAMAALVATLQLQLLLATNQLNRAEA) forms a coiled coil. Disordered regions lie at residues 396–416 (EERQ…QSAG) and 450–474 (SEDV…DNNF). Residues 456-470 (PEPKDPTQESWRHPQ) show a composition bias toward basic and acidic residues.

This sequence belongs to the CNOT10 family. Component of the CCR4-NOT complex. CNOT10 and CNOT11 form a subcomplex docked to the CNOT1 scaffold.

It localises to the cytoplasm. It is found in the nucleus. Functionally, component of the CCR4-NOT complex which is one of the major cellular mRNA deadenylases and is linked to various cellular processes including bulk mRNA degradation, miRNA-mediated repression, translational repression during translational initiation and general transcription regulation. Additional complex functions may be a consequence of its influence on mRNA expression. Is not required for association of CNOT7 to the CCR4-NOT complex. This chain is CCR4-NOT transcription complex subunit 10 (Not10), found in Drosophila melanogaster (Fruit fly).